Reading from the N-terminus, the 128-residue chain is Large ribosomal subunit protein uL22 (128 aa).

This sequence belongs to the universal ribosomal protein uL22 family. In terms of assembly, part of the 50S ribosomal subunit.

This protein binds specifically to 23S rRNA; its binding is stimulated by other ribosomal proteins, e.g. L4, L17, and L20. It is important during the early stages of 50S assembly. It makes multiple contacts with different domains of the 23S rRNA in the assembled 50S subunit and ribosome. In terms of biological role, the globular domain of the protein is located near the polypeptide exit tunnel on the outside of the subunit, while an extended beta-hairpin is found that lines the wall of the exit tunnel in the center of the 70S ribosome. In Methylocella silvestris (strain DSM 15510 / CIP 108128 / LMG 27833 / NCIMB 13906 / BL2), this protein is Large ribosomal subunit protein uL22.